We begin with the raw amino-acid sequence, 422 residues long: Serine--tRNA ligase (422 aa).

An L-serine-binding site is contributed by 229–231 (TAE). 260–262 (RKE) serves as a coordination point for ATP. E283 is a binding site for L-serine. Residue 347 to 350 (EISS) coordinates ATP. Position 383 (S383) interacts with L-serine.

This sequence belongs to the class-II aminoacyl-tRNA synthetase family. Type-1 seryl-tRNA synthetase subfamily. Homodimer. The tRNA molecule binds across the dimer.

It localises to the cytoplasm. It catalyses the reaction tRNA(Ser) + L-serine + ATP = L-seryl-tRNA(Ser) + AMP + diphosphate + H(+). The enzyme catalyses tRNA(Sec) + L-serine + ATP = L-seryl-tRNA(Sec) + AMP + diphosphate + H(+). Its pathway is aminoacyl-tRNA biosynthesis; selenocysteinyl-tRNA(Sec) biosynthesis; L-seryl-tRNA(Sec) from L-serine and tRNA(Sec): step 1/1. Its function is as follows. Catalyzes the attachment of serine to tRNA(Ser). Is also able to aminoacylate tRNA(Sec) with serine, to form the misacylated tRNA L-seryl-tRNA(Sec), which will be further converted into selenocysteinyl-tRNA(Sec). In Natranaerobius thermophilus (strain ATCC BAA-1301 / DSM 18059 / JW/NM-WN-LF), this protein is Serine--tRNA ligase.